A 27-amino-acid polypeptide reads, in one-letter code: Endoglucanase gh5 (27 aa).

Glu-6 (nucleophile) is an active-site residue.

The catalysed reaction is Endohydrolysis of (1-&gt;4)-beta-D-glucosidic linkages in cellulose, lichenin and cereal beta-D-glucans.. With respect to regulation, activity is stimulated by zinc ions, potassium ions and DTT. Activity is inhibited by manganese and chloride ions. Functionally, endoglucanase (EG) that cleaves the internal beta-1,4-glucosidic bonds in cellulose. The polypeptide is Endoglucanase gh5 (Fomes meliae (Fomitopsis meliae)).